The primary structure comprises 281 residues: 3-methyl-2-oxobutanoate hydroxymethyltransferase (281 aa).

Positions 1-20 (MSEQTIYGANTPGGSGPRTK) are disordered. Residues Asp-62 and Asp-101 each coordinate Mg(2+). Residues 62–63 (DS), Asp-101, and Lys-131 each bind 3-methyl-2-oxobutanoate. Mg(2+) is bound at residue Glu-133. Residue Glu-199 is the Proton acceptor of the active site.

Belongs to the PanB family. Homodecamer; pentamer of dimers. It depends on Mg(2+) as a cofactor.

It is found in the cytoplasm. The enzyme catalyses 3-methyl-2-oxobutanoate + (6R)-5,10-methylene-5,6,7,8-tetrahydrofolate + H2O = 2-dehydropantoate + (6S)-5,6,7,8-tetrahydrofolate. It participates in cofactor biosynthesis; (R)-pantothenate biosynthesis; (R)-pantoate from 3-methyl-2-oxobutanoate: step 1/2. In terms of biological role, catalyzes the reversible reaction in which hydroxymethyl group from 5,10-methylenetetrahydrofolate is transferred onto alpha-ketoisovalerate to form ketopantoate. The protein is 3-methyl-2-oxobutanoate hydroxymethyltransferase of Mycobacterium bovis (strain ATCC BAA-935 / AF2122/97).